A 385-amino-acid polypeptide reads, in one-letter code: Di-N-acetylchitobiase (385 aa).

Positions 1–38 are cleaved as a signal peptide; the sequence is MSRPQLRRWRLVSSPPSGVPGLALLALLALLALRLAAG. In terms of domain architecture, GH18 spans 39–385; sequence TDCPCPEPEL…EVLKPKLLQR (347 aa). Residue glutamate 143 is the Proton donor of the active site. Asparagine 193, asparagine 228, asparagine 262, and asparagine 299 each carry an N-linked (GlcNAc...) asparagine glycan.

This sequence belongs to the glycosyl hydrolase 18 family.

Its subcellular location is the lysosome. In terms of biological role, involved in the degradation of asparagine-linked glycoproteins. Hydrolyze of N-acetyl-beta-D-glucosamine (1-4)N-acetylglucosamine chitobiose core from the reducing end of the bond, it requires prior cleavage by glycosylasparaginase. The protein is Di-N-acetylchitobiase (CTBS) of Homo sapiens (Human).